The chain runs to 90 residues: Small ribosomal subunit protein bS16 (90 aa).

It belongs to the bacterial ribosomal protein bS16 family.

The sequence is that of Small ribosomal subunit protein bS16 from Lactobacillus delbrueckii subsp. bulgaricus (strain ATCC 11842 / DSM 20081 / BCRC 10696 / JCM 1002 / NBRC 13953 / NCIMB 11778 / NCTC 12712 / WDCM 00102 / Lb 14).